A 903-amino-acid chain; its full sequence is FIGNL1-interacting regulator of recombination and mitosis (903 aa).

2 positions are modified to phosphoserine: Ser101 and Ser795. Lys843 carries the post-translational modification N6-acetyllysine.

Interacts (via its N-terminal region) with PLK1; controls PLK1 kinase activity. Interacts (via the KVVXF motif) with PPP1CC; controls PLK1 kinase activity. Interacts with FIGNL1; may regulate homologous recombination. Phosphorylation at Ser-101 by PLK1 strengthens FIRRM-PLK1 interaction. Phosphorylation at Ser-795 by PLK1 negatively regulates its interaction with PPP1CC.

The protein localises to the chromosome. The protein resides in the centromere. It is found in the kinetochore. It localises to the nucleus. Its subcellular location is the midbody. The protein localises to the cytoplasm. The protein resides in the cytoskeleton. It is found in the spindle. Regulates PLK1 kinase activity at kinetochores and promotes faithful chromosome segregation in prometaphase by bridging kinase and phosphatase activities. Phosphorylation of FIRRM by PLK1 negatively regulates its interaction with the phosphatase, PPP1CC, thus creating a negative feedback loop for maintaining proper PLK1 kinase activity during mitosis. In complex with FIGL1 may regulate homologous recombination. This is FIGNL1-interacting regulator of recombination and mitosis from Mus musculus (Mouse).